Reading from the N-terminus, the 341-residue chain is Probable UDP-glucuronate 4-epimerase (341 aa).

Tyrosine 152 acts as the Proton acceptor in catalysis.

It belongs to the NAD(P)-dependent epimerase/dehydratase family. NAD(+) serves as cofactor.

The enzyme catalyses UDP-alpha-D-glucuronate = UDP-alpha-D-galacturonate. This chain is Probable UDP-glucuronate 4-epimerase, found in Rhizobium meliloti (strain 1021) (Ensifer meliloti).